A 58-amino-acid polypeptide reads, in one-letter code: Putative transcript Y 13 protein (58 aa).

Residues 17–37 form a helical membrane-spanning segment; that stretch reads LLGWDLNLSLFLGLCLMLLLA.

The protein resides in the membrane. This chain is Putative transcript Y 13 protein (TTTY13), found in Homo sapiens (Human).